The primary structure comprises 61 residues: Probable tautomerase spyM18_1099 (61 aa).

P2 serves as the catalytic Proton acceptor; via imino nitrogen.

The protein belongs to the 4-oxalocrotonate tautomerase family.

This Streptococcus pyogenes serotype M18 (strain MGAS8232) protein is Probable tautomerase spyM18_1099.